Consider the following 243-residue polypeptide: Carboxy-S-adenosyl-L-methionine synthase (243 aa).

S-adenosyl-L-methionine is bound by residues Tyr-40, 65-67 (GCS), 90-91 (DN), 118-119 (DI), Asn-133, and Arg-200.

It belongs to the class I-like SAM-binding methyltransferase superfamily. Cx-SAM synthase family. Homodimer.

It carries out the reaction prephenate + S-adenosyl-L-methionine = carboxy-S-adenosyl-L-methionine + 3-phenylpyruvate + H2O. Functionally, catalyzes the conversion of S-adenosyl-L-methionine (SAM) to carboxy-S-adenosyl-L-methionine (Cx-SAM). The polypeptide is Carboxy-S-adenosyl-L-methionine synthase (Shewanella sp. (strain ANA-3)).